A 350-amino-acid polypeptide reads, in one-letter code: C5a anaphylatoxin chemotactic receptor 1 (350 aa).

Over 1-37 (MDSFNYTTPDYGHYDDKDTLDLNTPVDKTSNTLRVPD) the chain is Extracellular. Asparagine 5 is a glycosylation site (N-linked (GlcNAc...) asparagine). Positions 10-18 (DYGHYDDKD) are required for CHIPS binding. A sulfotyrosine mark is found at tyrosine 11 and tyrosine 14. Residues 21 to 30 (DLNTPVDKTS) are involved in C5a binding. The chain crosses the membrane as a helical span at residues 38–64 (ILALVIFAVVFLVGVLGNALVVWVTAF). Residues 65–69 (EAKRT) lie on the Cytoplasmic side of the membrane. The chain crosses the membrane as a helical span at residues 70-93 (INAIWFLNLAVADFLSCLALPILF). Topologically, residues 94–110 (TSIVQHHHWPFGGAACS) are extracellular. Cysteines 109 and 188 form a disulfide. Residues 111–132 (ILPSLILLNMYASILLLATISA) form a helical membrane-spanning segment. The Cytoplasmic portion of the chain corresponds to 133–153 (DRFLLVFKPIWCQNFRGAGLA). A helical transmembrane segment spans residues 154–174 (WIACAVAWGLALLLTIPSFLY). Residues 175 to 200 (RVVREEYFPPKVLCGVDYSHDKRRER) are Extracellular-facing. The chain crosses the membrane as a helical span at residues 201–226 (AVAIVRLVLGFLWPLLTLTICYTFIL). The Cytoplasmic segment spans residues 227–242 (LRTWSRRATRSTKTLK). Residues 243-265 (VVVAVVASFFIFWLPYQVTGIMM) traverse the membrane as a helical segment. Residues 266–282 (SFLEPSSPTFLLLKKLD) lie on the Extracellular side of the membrane. A helical membrane pass occupies residues 283 to 303 (SLCVSFAYINCCINPIIYVVA). Topologically, residues 304-350 (GQGFQGRLRKSLPSLLRNVLTEESVVRESKSFTRSTVDTMAQKTQAV) are cytoplasmic. Residues serine 314, serine 317, serine 327, serine 332, serine 334, and serine 338 each carry the phosphoserine modification.

The protein belongs to the G-protein coupled receptor 1 family. In terms of assembly, homodimer. May also form higher-order oligomers. Interacts (when phosphorylated) with ARRB1 and ARRB2; the interaction is associated with internalization of C5aR. Interacts (via N-terminal domain) with S.aureus chemotaxis inhibitory protein (CHIPS); the interaction blocks the receptor and may thus inhibit the immune response. In terms of processing, sulfation plays a critical role in the association of C5aR with C5a, but no significant role in the ability of the receptor to transduce a signal and mobilize calcium in response to a small a small peptide agonist. Sulfation at Tyr-14 is important for CHIPS binding. Post-translationally, phosphorylated on serine residues in response to C5a binding, resulting in internalization of the receptor and short-term desensitization to the ligand. The key residues involved in this process are Ser-334 and Ser-338.

The protein resides in the cell membrane. It localises to the cytoplasmic vesicle. Functionally, receptor for the chemotactic and inflammatory peptide anaphylatoxin C5a. The ligand interacts with at least two sites on the receptor: a high-affinity site on the extracellular N-terminus, and a second site in the transmembrane region which activates downstream signaling events. Receptor activation stimulates chemotaxis, granule enzyme release, intracellular calcium release and superoxide anion production. In Homo sapiens (Human), this protein is C5a anaphylatoxin chemotactic receptor 1 (C5AR1).